We begin with the raw amino-acid sequence, 359 residues long: 4-galactosyl-N-acetylglucosaminide 3-alpha-L-fucosyltransferase 9 (359 aa).

The Cytoplasmic segment spans residues 1-11; sequence MTSTSKGILRP. Residues 12–32 form a helical; Signal-anchor for type II membrane protein membrane-spanning segment; the sequence is FLIVCIILGCFVACLLIYIKP. Over 33–359 the chain is Lumenal; the sequence is TNSWVFSPME…VGNLEKWFWN (327 aa). A glycan (N-linked (GlcNAc...) asparagine) is linked at Asn-62. An acceptor-binding region spans residues 63–168; that stretch reads ETTILVWVWP…RRDSDIQVPY (106 aa). Gln-75 serves as a coordination point for a beta-D-galactosyl-(1-&gt;4)-N-acetyl-beta-D-glucosaminyl derivative. 3 cysteine pairs are disulfide-bonded: Cys-82–Cys-335, Cys-91–Cys-338, and Cys-190–Cys-238. Asn-101 is a glycosylation site (N-linked (GlcNAc...) asparagine). Residue Glu-137 coordinates a beta-D-galactosyl-(1-&gt;4)-N-acetyl-beta-D-glucosaminyl derivative. Glu-137 serves as the catalytic Nucleophile. Residue Glu-137 participates in GDP-beta-L-fucose binding. Asn-153 carries an N-linked (GlcNAc...) asparagine glycan. The GDP-beta-L-fucose site is built by Tyr-168, Val-192, Ser-194, Asn-195, Arg-202, Val-226, Tyr-241, Asn-246, Tyr-252, Glu-255, and Lys-256. The tract at residues 169–326 is donor-binding; sequence GFLTVSTSPF…NWRKDFTVNL (158 aa). The interval 327–359 is acceptor-binding; sequence PRFWESHACLACDHVKRHQEYKSVGNLEKWFWN.

The protein belongs to the glycosyltransferase 10 family. Homodimer. N-glycosylated with complex-type N-glycans.

The protein resides in the golgi apparatus. It is found in the trans-Golgi network membrane. It localises to the golgi apparatus membrane. It catalyses the reaction a beta-D-galactosyl-(1-&gt;4)-N-acetyl-beta-D-glucosaminyl derivative + GDP-beta-L-fucose = a beta-D-galactosyl-(1-&gt;4)-[alpha-L-fucosyl-(1-&gt;3)]-N-acetyl-beta-D-glucosaminyl derivative + GDP + H(+). The enzyme catalyses an alpha-Neu5Ac-(2-&gt;3)-beta-D-Gal-(1-&gt;4)-beta-D-GlcNAc-(1-&gt;3)-beta-D-Gal-(1-&gt;4)-beta-D-GlcNAc derivative + GDP-beta-L-fucose = an alpha-Neu5Ac-(2-&gt;3)-beta-D-Gal-(1-&gt;4)-beta-D-GlcNAc-(1-&gt;3)-beta-D-Gal-(1-&gt;4)-[alpha-L-Fuc-(1-&gt;3)]-beta-D-GlcNAc derivative + GDP + H(+). The catalysed reaction is alpha-N-glycoloylneuraminosyl-(2-&gt;3)-beta-D-galactosyl-(1-&gt;4)-N-acetyl-beta-D-glucosaminyl-(1-&gt;3)-beta-D-galactosyl-(1-&gt;4)-N-acetyl-beta-D-glucosaminyl-(1-&gt;3)-beta-D-galactosyl-(1-&gt;4)-beta-D-glucosyl-(1&lt;-&gt;1')-ceramide + GDP-beta-L-fucose = alpha-N-glycoloylneuraminosyl-(2-&gt;3)-beta-D-galactosyl-(1-&gt;4)-N-acetyl-beta-D-glucosaminyl-(1-&gt;3)-beta-D-galactosyl-(1-&gt;4)-[alpha-L-fucosyl-(1-&gt;3)]-N-acetyl-beta-D-glucosaminyl-(1-&gt;3)-beta-D-galactosyl-(1-&gt;4)-beta-D-glucosyl-(1&lt;-&gt;1')-ceramide + GDP + H(+). It carries out the reaction alpha-D-galactosyl-(1-&gt;3)-beta-D-galactosyl-(1-&gt;4)-N-acetyl-beta-D-glucosaminyl-(1-&gt;3)-beta-D-galactosyl-(1-&gt;4)-beta-D-glucosyl-(1&lt;-&gt;1')-ceramide + GDP-beta-L-fucose = a neolactoside IV(3)-alpha-Gal,III(3)-alpha-Fuc-nLc4Cer + GDP + H(+). It catalyses the reaction a neolactoside nLc4Cer + GDP-beta-L-fucose = a neolactoside III(3)-alpha-Fuc-nLc4Cer + GDP + H(+). The enzyme catalyses an N-acetyl-alpha-neuraminyl-(2-&gt;3)-beta-D-galactosyl-(1-&gt;4)-N-acetyl-beta-D-glucosaminyl derivative + GDP-beta-L-fucose = an alpha-Neu5Ac-(2-&gt;3)-beta-D-Gal-(1-&gt;4)-[alpha-L-Fuc-(1-&gt;3)]-beta-D-GlcNAc derivative + GDP + H(+). The catalysed reaction is beta-D-Gal-(1-&gt;4)-beta-D-GlcNAc-(1-&gt;3)-beta-D-Gal-(1-&gt;4)-D-Glc + GDP-beta-L-fucose = beta-D-Gal-(1-&gt;4)-[alpha-L-Fuc-(1-&gt;3)]-beta-D-GlcNAc-(1-&gt;3)-beta-D-Gal-(1-&gt;4)-D-Glc + GDP + H(+). It carries out the reaction an alpha-L-Fuc-(1-&gt;2)-beta-D-Gal-(1-&gt;4)-beta-D-GlcNAc derivative + GDP-beta-L-fucose = an alpha-L-Fuc-(1-&gt;2)-beta-D-Gal-(1-&gt;4)-[alpha-L-Fuc-(1-&gt;3)]-beta-D-GlcNAc derivative + GDP + H(+). The protein operates within protein modification; protein glycosylation. Its pathway is glycolipid biosynthesis. Activated by Mn2+. Catalyzes alpha(1-&gt;3) linkage of fucosyl moiety transferred from GDP-beta-L-fucose to N-acetyl glucosamine (GlcNAc) within type 2 lactosamine (LacNAc, beta-D-Gal-(1-&gt;4)-beta-D-GlcNAc-) glycan attached to glycolipids and N- or O-linked glycoproteins. Fucosylates distal type 2 LacNAc and its fucosylated (H-type 2 LacNAc) and sialylated (sialyl-type 2 LacNAc) derivatives to form Lewis x (Lex) (CD15) and Lewis y (Ley) antigenic epitopes involved in cell adhesion and differentiation. Generates Lex epitopes in the brain, presumably playing a role in the maintenance of neuronal stemness and neurite outgrowth in progenitor neural cells. Fucosylates the internal type 2 LacNAc unit of the polylactosamine chain to form VIM-2 antigen that serves as recognition epitope for SELE. Can also modify milk oligosaccharides in particular type 2 tetrasaccharide LNnT. This chain is 4-galactosyl-N-acetylglucosaminide 3-alpha-L-fucosyltransferase 9, found in Rattus norvegicus (Rat).